The primary structure comprises 341 residues: UDP-N-acetylenolpyruvoylglucosamine reductase (341 aa).

Residues Val15–Ala185 form the FAD-binding PCMH-type domain. The active site involves Arg161. The active-site Proton donor is the Ser231. Glu327 is a catalytic residue.

The protein belongs to the MurB family. Requires FAD as cofactor.

It localises to the cytoplasm. The catalysed reaction is UDP-N-acetyl-alpha-D-muramate + NADP(+) = UDP-N-acetyl-3-O-(1-carboxyvinyl)-alpha-D-glucosamine + NADPH + H(+). The protein operates within cell wall biogenesis; peptidoglycan biosynthesis. Functionally, cell wall formation. This chain is UDP-N-acetylenolpyruvoylglucosamine reductase, found in Shewanella sp. (strain ANA-3).